The following is a 144-amino-acid chain: Large ribosomal subunit protein uL14 (144 aa).

The protein belongs to the universal ribosomal protein uL14 family. In terms of assembly, part of the 50S ribosomal subunit. Forms a cluster with proteins L3 and L24e, part of which may contact the 16S rRNA in 2 intersubunit bridges.

Functionally, binds to 23S rRNA. Forms part of two intersubunit bridges in the 70S ribosome. This is Large ribosomal subunit protein uL14 from Caldivirga maquilingensis (strain ATCC 700844 / DSM 13496 / JCM 10307 / IC-167).